We begin with the raw amino-acid sequence, 1013 residues long: Probable ubiquitination network signaling protein acrB (1013 aa).

Disordered regions lie at residues 1–65 (MPRS…NSDT) and 105–137 (SYGQANGAVPQNGGLTGQASRRTESSKRSGSNT). A compositionally biased stretch (polar residues) spans 30–65 (QKSNGQLNGNANGSSAPISGPSSQVDWPSSRSNSDT). 3 helical membrane-spanning segments follow: residues 158 to 178 (IAILIFLLQLPPMVLTLVQFL), 211 to 231 (LGTMIAMDGFFLLFWGLFMWT), and 254 to 274 (SGKNGGVNTLCVGIVLVLHLI). Residues 339-367 (RRSMAKNRAPAPPRTGKRVDTEASAGSQT) form a disordered region. Residues 596–782 (TTLKNSIVNA…REQDQAKVEA (187 aa)) are a coiled coil. A compositionally biased stretch (polar residues) spans 875–899 (SPLQHASSPIGPTSSRPTSPTQAPS). Disordered stretches follow at residues 875–902 (SPLQHASSPIGPTSSRPTSPTQAPSYLQ) and 953–1013 (DLSE…GKGN). Residues 954 to 965 (LSEKVVDKRRSS) show a composition bias toward basic and acidic residues. Over residues 993 to 1002 (SGSGGSGSGS) the composition is skewed to gly residues. A compositionally biased stretch (low complexity) spans 1003 to 1013 (GSPSSATGKGN).

It belongs to the acrB family.

It is found in the membrane. Functionally, component of the regulatory network controlling carbon source utilization through ubiquitination and deubiquitination involving creA, creB, creC, creD and acrB. Involved in resistance to acriflavine, and required for normal growth on a range of sole carbon sources, including fructose, cellobiose, raffinose, and starch, and reduced utilization of amino acids, including GABA and beta-alanine, as sole carbon and nitrogen sources. This chain is Probable ubiquitination network signaling protein acrB (acrB), found in Aspergillus oryzae (strain ATCC 42149 / RIB 40) (Yellow koji mold).